Here is a 404-residue protein sequence, read N- to C-terminus: Adenosylhomocysteinase (404 aa).

Substrate-binding residues include aspartate 114 and glutamate 139. 140-142 (TTT) is an NAD(+) binding site. Lysine 169 and aspartate 173 together coordinate substrate. Residues asparagine 174, 203 to 208 (GYGWCG), glutamate 226, asparagine 261, 282 to 284 (AGH), and asparagine 329 contribute to the NAD(+) site.

The protein belongs to the adenosylhomocysteinase family. NAD(+) is required as a cofactor.

Its subcellular location is the cytoplasm. It catalyses the reaction S-adenosyl-L-homocysteine + H2O = L-homocysteine + adenosine. The protein operates within amino-acid biosynthesis; L-homocysteine biosynthesis; L-homocysteine from S-adenosyl-L-homocysteine: step 1/1. Its function is as follows. May play a key role in the regulation of the intracellular concentration of adenosylhomocysteine. This is Adenosylhomocysteinase from Thermotoga maritima (strain ATCC 43589 / DSM 3109 / JCM 10099 / NBRC 100826 / MSB8).